A 776-amino-acid polypeptide reads, in one-letter code: Protein SEY1 (776 aa).

The Cytoplasmic portion of the chain corresponds to Met-1–His-681. One can recognise a GB1/RHD3-type G domain in the interval Gly-34 to Tyr-263. Residue Gly-44 to Ser-51 coordinates GTP. Residues Ile-682–Ile-702 traverse the membrane as a helical segment. Topologically, residues Arg-703–Pro-705 are lumenal. Residues Leu-706 to Leu-726 form a helical membrane-spanning segment. Topologically, residues Trp-727–Lys-776 are cytoplasmic.

Belongs to the TRAFAC class dynamin-like GTPase superfamily. GB1/RHD3 GTPase family. RHD3 subfamily. In terms of assembly, interacts with RTN1 and YOP1; GTP binding is not required for these interactions.

The protein resides in the endoplasmic reticulum membrane. Its function is as follows. Cooperates with the reticulon proteins RTN1 and RTN2 and the tubule-shaping DP1 family protein YOP1 to generate and maintain the structure of the tubular endoplasmic reticulum network. Has GTPase activity, which is required for its function in ER organization. The protein is Protein SEY1 of Saccharomyces cerevisiae (strain YJM789) (Baker's yeast).